The primary structure comprises 380 residues: MSLTENLQLLLNLDSLPSKRENLIKRKECGLTIMLCGASGTGKTTFFNTLFATSLQPEKSYETAKETIAKKTLEVKKNKAVIEEDGFHINLTVLDTPGFGDFIDNTSCWNTVAEYLDEQHERYLIHDQNSLRVPRKDTRVHVCLYFITPVSFGMLPLDVLAMKELSTHVNLVPVIAKADTFTTPELTQIKQKIRRILEAQSIDVFHPSTEYSDYETAELLDSSLPYAIISSVNEVCKDDGEKSQGRRYPWGTSEIYEETHCDFLKLKKLLINRHMLELINTTETNIYERYRREQLTNRKSGIPKLKKEHYERLNNEKRAIQQKITQMTNETESFFQAKEEKMIETRDALNSELSEYHERIRALETQIESLKSYKGRGHKK.

One can recognise a Septin-type G domain in the interval 27–297 (KECGLTIMLC…ERYRREQLTN (271 aa)). The G1 motif stretch occupies residues 37–44 (GASGTGKT). Residues 37-44 (GASGTGKT), Thr-72, Gly-98, 177-185 (KADTFTTPE), and Arg-246 contribute to the GTP site. The G3 motif stretch occupies residues 95–98 (DTPG). The G4 motif stretch occupies residues 176-179 (AKAD). Positions 304 to 380 (KLKKEHYERL…KSYKGRGHKK (77 aa)) form a coiled coil.

Belongs to the TRAFAC class TrmE-Era-EngA-EngB-Septin-like GTPase superfamily. Septin GTPase family. As to quaternary structure, component of the sporulation-specific septin complex composed of at least spn2, spn5, spn6 and spn7.

The protein resides in the cytoplasm. It localises to the forespore membrane. In terms of biological role, septin-like protein involved in the correct orientation of forespore membrane extension during sporulation. The protein is Septin homolog spn6 (spn6) of Schizosaccharomyces pombe (strain 972 / ATCC 24843) (Fission yeast).